Consider the following 640-residue polypeptide: 5-aminolevulinate synthase, non-specific, mitochondrial (640 aa).

The transit peptide at 1–56 (METVVRSCPFLSRVPQAFLQKAGKSLLFYAQNCPKMMEVGAKPAPRALSTAAVHYQ) directs the protein to the mitochondrion. Disordered stretches follow at residues 60–103 (ETPP…TSQG) and 143–163 (EVAETSGGPSVVSVKTDGGDP). The segment covering 75 to 92 (VQQTPDGSQQSPDGTQLP) has biased composition (polar residues). Residues Arg217, Ser334, and Lys353 each contribute to the substrate site. 3 residues coordinate pyridoxal 5'-phosphate: Ser386, His414, and Thr442. Lys445 is an active-site residue. Position 445 is an N6-(pyridoxal phosphate)lysine (Lys445). The pyridoxal 5'-phosphate site is built by Thr474 and Thr475. Substrate is bound at residue Thr562. Hydroxyproline is present on Pro576.

Belongs to the class-II pyridoxal-phosphate-dependent aminotransferase family. As to quaternary structure, homodimer. Interacts (hydroxylated form) with VHL. Pyridoxal 5'-phosphate is required as a cofactor. Post-translationally, in normoxia, is hydroxylated at Pro-576, promoting interaction with VHL, initiating ubiquitination and subsequent degradation via the proteasome. Ubiquitinated; in normoxia following hydroxylation and interaction with VHL, leading to its subsequent degradation via the proteasome.

The protein resides in the mitochondrion inner membrane. The enzyme catalyses succinyl-CoA + glycine + H(+) = 5-aminolevulinate + CO2 + CoA. The protein operates within porphyrin-containing compound metabolism; protoporphyrin-IX biosynthesis; 5-aminolevulinate from glycine: step 1/1. Functionally, catalyzes the pyridoxal 5'-phosphate (PLP)-dependent condensation of succinyl-CoA and glycine to form aminolevulinic acid (ALA), with CoA and CO2 as by-products. This chain is 5-aminolevulinate synthase, non-specific, mitochondrial (ALAS1), found in Pongo abelii (Sumatran orangutan).